The following is a 344-amino-acid chain: N-acetyl-gamma-glutamyl-phosphate reductase (344 aa).

The active site involves Cys149.

Belongs to the NAGSA dehydrogenase family. Type 1 subfamily.

The protein localises to the cytoplasm. It catalyses the reaction N-acetyl-L-glutamate 5-semialdehyde + phosphate + NADP(+) = N-acetyl-L-glutamyl 5-phosphate + NADPH + H(+). Its pathway is amino-acid biosynthesis; L-arginine biosynthesis; N(2)-acetyl-L-ornithine from L-glutamate: step 3/4. Functionally, catalyzes the NADPH-dependent reduction of N-acetyl-5-glutamyl phosphate to yield N-acetyl-L-glutamate 5-semialdehyde. The protein is N-acetyl-gamma-glutamyl-phosphate reductase of Thermoanaerobacter pseudethanolicus (strain ATCC 33223 / 39E) (Clostridium thermohydrosulfuricum).